The primary structure comprises 402 residues: Diaminopimelate decarboxylase (402 aa).

An N6-(pyridoxal phosphate)lysine modification is found at Lys-61. Residues Gly-233 and 269-272 (EPGR) each bind pyridoxal 5'-phosphate. Arg-272, Arg-304, Tyr-308, Glu-334, and Tyr-360 together coordinate substrate. Tyr-360 is a binding site for pyridoxal 5'-phosphate.

It belongs to the Orn/Lys/Arg decarboxylase class-II family. LysA subfamily. As to quaternary structure, homodimer. It depends on pyridoxal 5'-phosphate as a cofactor.

The enzyme catalyses meso-2,6-diaminopimelate + H(+) = L-lysine + CO2. Its pathway is amino-acid biosynthesis; L-lysine biosynthesis via DAP pathway; L-lysine from DL-2,6-diaminopimelate: step 1/1. Its function is as follows. Specifically catalyzes the decarboxylation of meso-diaminopimelate (meso-DAP) to L-lysine. This Thermoplasma acidophilum (strain ATCC 25905 / DSM 1728 / JCM 9062 / NBRC 15155 / AMRC-C165) protein is Diaminopimelate decarboxylase.